The primary structure comprises 368 residues: Ubiquitin domain-containing protein UBFD1 (368 aa).

The segment at 106 to 139 is disordered; it reads SCDARGNLQPAPAQPPGDPAAQASVSNGEDAGGG. Positions 143–218 constitute a Ubiquitin-like domain; that stretch reads ELVDLKIIWN…IMVVGSTIND (76 aa). The tract at residues 231 to 263 is disordered; it reads QDAKAEENKKEPLCRQKQHRKVLDKGKPEDVMP. 2 stretches are compositionally biased toward basic and acidic residues: residues 233 to 244 and 251 to 260; these read AKAEENKKEPLC and KVLDKGKPED.

This chain is Ubiquitin domain-containing protein UBFD1 (Ubfd1), found in Mus musculus (Mouse).